The primary structure comprises 206 residues: Cytochrome c biogenesis ATP-binding export protein CcmA (206 aa).

The region spanning 3–206 (VSVDDLCVTR…LAGASDEAFL (204 aa)) is the ABC transporter domain. 35 to 42 (GPNGSGKT) is an ATP binding site.

Belongs to the ABC transporter superfamily. CcmA exporter (TC 3.A.1.107) family. In terms of assembly, the complex is composed of two ATP-binding proteins (CcmA) and two transmembrane proteins (CcmB).

It is found in the cell inner membrane. It catalyses the reaction heme b(in) + ATP + H2O = heme b(out) + ADP + phosphate + H(+). In terms of biological role, part of the ABC transporter complex CcmAB involved in the biogenesis of c-type cytochromes; once thought to export heme, this seems not to be the case, but its exact role is uncertain. Responsible for energy coupling to the transport system. This chain is Cytochrome c biogenesis ATP-binding export protein CcmA, found in Roseobacter denitrificans (strain ATCC 33942 / OCh 114) (Erythrobacter sp. (strain OCh 114)).